The following is a 148-amino-acid chain: Ribonuclease H (148 aa).

Residues 1 to 143 (MNQVVIYTDG…ADMLANKGVE (143 aa)) form the RNase H type-1 domain. The Mg(2+) site is built by aspartate 9, glutamate 47, aspartate 69, and aspartate 135.

The protein belongs to the RNase H family. Monomer. The cofactor is Mg(2+).

Its subcellular location is the cytoplasm. It carries out the reaction Endonucleolytic cleavage to 5'-phosphomonoester.. In terms of biological role, endonuclease that specifically degrades the RNA of RNA-DNA hybrids. The chain is Ribonuclease H from Acidovorax sp. (strain JS42).